Here is a 372-residue protein sequence, read N- to C-terminus: Peptide chain release factor 2 (372 aa).

Glutamine 253 is subject to N5-methylglutamine.

Belongs to the prokaryotic/mitochondrial release factor family. Post-translationally, methylated by PrmC. Methylation increases the termination efficiency of RF2.

The protein resides in the cytoplasm. Functionally, peptide chain release factor 2 directs the termination of translation in response to the peptide chain termination codons UGA and UAA. This chain is Peptide chain release factor 2, found in Nocardia farcinica (strain IFM 10152).